Reading from the N-terminus, the 151-residue chain is Small ribosomal subunit protein uS11 (151 aa).

The segment at 129–151 is disordered; that stretch reads IEDVTPVPSDSTRRKGGRRGRRL. Residues 142 to 151 show a composition bias toward basic residues; it reads RKGGRRGRRL.

This sequence belongs to the universal ribosomal protein uS11 family.

This Procambarus clarkii (Red swamp crayfish) protein is Small ribosomal subunit protein uS11 (RPS14).